The chain runs to 143 residues: Pathogenesis-related protein P2 (143 aa).

An N-terminal signal peptide occupies residues 1–23 (MERVNKLCVAFFVINMMMAVAAA). The Barwin domain occupies 24–143 (QSATNVRATY…LNVNYEFVNC (120 aa)). 3 cysteine pairs are disulfide-bonded: Cys52/Cys84, Cys73/Cys107, and Cys87/Cys143.

It localises to the secreted. The protein localises to the cell wall. The chain is Pathogenesis-related protein P2 from Solanum lycopersicum (Tomato).